The following is a 286-amino-acid chain: 33 kDa chaperonin (286 aa).

Disulfide bonds link Cys225/Cys227 and Cys258/Cys261.

This sequence belongs to the HSP33 family. Under oxidizing conditions two disulfide bonds are formed involving the reactive cysteines. Under reducing conditions zinc is bound to the reactive cysteines and the protein is inactive.

It is found in the cytoplasm. Redox regulated molecular chaperone. Protects both thermally unfolding and oxidatively damaged proteins from irreversible aggregation. Plays an important role in the bacterial defense system toward oxidative stress. The sequence is that of 33 kDa chaperonin from Shewanella woodyi (strain ATCC 51908 / MS32).